We begin with the raw amino-acid sequence, 367 residues long: Histidinol-phosphate aminotransferase (367 aa).

N6-(pyridoxal phosphate)lysine is present on Lys-221.

The protein belongs to the class-II pyridoxal-phosphate-dependent aminotransferase family. Histidinol-phosphate aminotransferase subfamily. Homodimer. The cofactor is pyridoxal 5'-phosphate.

It catalyses the reaction L-histidinol phosphate + 2-oxoglutarate = 3-(imidazol-4-yl)-2-oxopropyl phosphate + L-glutamate. It functions in the pathway amino-acid biosynthesis; L-histidine biosynthesis; L-histidine from 5-phospho-alpha-D-ribose 1-diphosphate: step 7/9. In Erythrobacter litoralis (strain HTCC2594), this protein is Histidinol-phosphate aminotransferase.